The primary structure comprises 78 residues: Major outer membrane lipoprotein Lpp (78 aa).

The N-terminal stretch at 1-20 is a signal peptide; that stretch reads MKATKLVLGAVILGSTLLAG. A lipid anchor (N-palmitoyl cysteine) is attached at Cys-21. Cys-21 carries S-diacylglycerol cysteine lipidation. 2 repeats span residues 24–34 and 38–48; these read NAKIDQLSSDV and NAKVDQLSNDV. Residues 27-75 are a coiled coil; sequence IDQLSSDVQTLNAKVDQLSNDVNAMRSDVQAAKDDAARANQRLDNMATK. Residue Lys-78 is modified to N6-murein peptidoglycan lysine.

This sequence belongs to the Lpp family. In terms of assembly, homotrimer.

It is found in the cell outer membrane. It localises to the secreted. The protein resides in the cell wall. In terms of biological role, a highly abundant outer membrane lipoprotein that controls the distance between the inner and outer membranes. The only protein known to be covalently linked to the peptidoglycan network (PGN). Also non-covalently binds the PGN. The link between the cell outer membrane and PGN contributes to maintenance of the structural and functional integrity of the cell envelope, and maintains the correct distance between the PGN and the outer membrane. This is Major outer membrane lipoprotein Lpp from Shigella flexneri.